A 431-amino-acid chain; its full sequence is Serine--tRNA ligase (431 aa).

The interval 41-66 (QSRTQELQAERNARSKSIGEAARRGE) is disordered. Residue 240–242 (TSE) participates in L-serine binding. 271 to 273 (RSE) contributes to the ATP binding site. E294 is an L-serine binding site. Position 358–361 (358–361 (EISS)) interacts with ATP. S392 serves as a coordination point for L-serine.

Belongs to the class-II aminoacyl-tRNA synthetase family. Type-1 seryl-tRNA synthetase subfamily. As to quaternary structure, homodimer. The tRNA molecule binds across the dimer.

The protein resides in the cytoplasm. It carries out the reaction tRNA(Ser) + L-serine + ATP = L-seryl-tRNA(Ser) + AMP + diphosphate + H(+). The enzyme catalyses tRNA(Sec) + L-serine + ATP = L-seryl-tRNA(Sec) + AMP + diphosphate + H(+). Its pathway is aminoacyl-tRNA biosynthesis; selenocysteinyl-tRNA(Sec) biosynthesis; L-seryl-tRNA(Sec) from L-serine and tRNA(Sec): step 1/1. Its function is as follows. Catalyzes the attachment of serine to tRNA(Ser). Is also able to aminoacylate tRNA(Sec) with serine, to form the misacylated tRNA L-seryl-tRNA(Sec), which will be further converted into selenocysteinyl-tRNA(Sec). In Aeromonas salmonicida (strain A449), this protein is Serine--tRNA ligase.